Reading from the N-terminus, the 699-residue chain is Proline-rich receptor-like protein kinase PERK7 (699 aa).

The tract at residues 1–167 (MAEGQSPENS…TSNSGSNSSS (167 aa)) is disordered. The Extracellular portion of the chain corresponds to 1–172 (MAEGQSPENS…SNSSSNDGLN (172 aa)). Composition is skewed to pro residues over residues 9-23 (NSPP…PSPP) and 43-68 (SPPP…PPLP). Asparagine 70 carries an N-linked (GlcNAc...) asparagine glycan. Residues 100 to 121 (PPQQSDNNGNKGNNNENNKGND) are compositionally biased toward low complexity. The N-linked (GlcNAc...) asparagine glycan is linked to asparagine 131. Polar residues predominate over residues 148 to 158 (HSQPRSLAPPT). Asparagine 164 carries N-linked (GlcNAc...) asparagine glycosylation. The helical transmembrane segment at 173 to 193 (IGAVIGLVAAAGILFIVMILL) threads the bilayer. The Cytoplasmic segment spans residues 194–699 (CVCCFRKKKK…SKTTTTNRGI (506 aa)). Threonine 325 bears the Phosphothreonine mark. The Protein kinase domain occupies 336–615 (FSKDRLLGQG…VRTLEGDASL (280 aa)). ATP is bound by residues 342–350 (LGQGGFGYV) and lysine 364. Position 410 is a phosphotyrosine (tyrosine 410). Catalysis depends on aspartate 461, which acts as the Proton acceptor. Phosphoserine is present on residues serine 465 and serine 494. A phosphothreonine mark is found at threonine 495 and threonine 500. Tyrosine 508 carries the phosphotyrosine modification. 2 disordered regions span residues 609–639 (LEGD…DYEM) and 658–699 (DYGA…NRGI). Over residues 687–699 (GSTSKTTTTNRGI) the composition is skewed to polar residues.

The protein belongs to the protein kinase superfamily. Ser/Thr protein kinase family. Mostly expressed in flower buds.

It is found in the cell membrane. It carries out the reaction L-seryl-[protein] + ATP = O-phospho-L-seryl-[protein] + ADP + H(+). The catalysed reaction is L-threonyl-[protein] + ATP = O-phospho-L-threonyl-[protein] + ADP + H(+). The polypeptide is Proline-rich receptor-like protein kinase PERK7 (PERK7) (Arabidopsis thaliana (Mouse-ear cress)).